The following is a 525-amino-acid chain: Ribonuclease III domain-containing protein RNC1, chloroplastic (525 aa).

The transit peptide at 1–28 (MGPPAMAFQALTLTPLPFSLHSSSRRVR) directs the protein to the chloroplast. 2 consecutive RNase III domains span residues 125 to 271 (LLEA…LCFG) and 403 to 503 (EHPR…CVYG).

As to quaternary structure, interacts with RNA. Part of large ribonucleo-protein particles that contain CAF1 and/or CAF2.

The protein resides in the plastid. It is found in the chloroplast stroma. Functionally, binds specific group II introns in chloroplasts and facilitates their splicing. Acts on both subgroup IIA and subgroup IIB introns. The substrates of the subgroup II also require the CRM domain proteins CAF1 or CAF2. Binds both single-stranded and double-stranded RNA non-specifically, but lacks endonuclease activity. Required for plastid ribosome biogenesis. The protein is Ribonuclease III domain-containing protein RNC1, chloroplastic of Zea mays (Maize).